A 1596-amino-acid chain; its full sequence is MESRETLSSSRQRGGESDFLPVSSAKPPAAPGCAGEPLLSTPGPGKGIPVGGERMEPEEEDELGSGRDVDSNSNADSEKWVAGDGLEEQEFSIKEANFTEGSLKLKIQTTKRAKKPPKNLENYICPPEIKITIKQSGDQKVSRAGKNSKATKEEERSHSKKKLLTASDLAASDLKGFQPQAYERPQKHSTLHYDTGLPQDFTGDTLKPKHQQKSSSQNHMDWSTNSDSGPVTQNCFISPESGRETASTSKIPALEPVASFAKAQGKKGSAGNTWSQLSNNNKDLLLGGVAPSPSSHSSPAPPSSSAECNGLQPLVDQDGGGTKEPPEPPTVGSKKKSSKKDVISQTIPNPDLDWVKNAQKAFDNTEGKREGYSADSAQEASPARQNVSSASNPENDSSHVRITIPIKAPSLDPTNHKRKKRQSIKAVVEKIMPEKALASGITMSSEVVNRILSNSEGNKKDPRVPKLSKMIENESPSVGLETGGNAEKVIPGGVSKPRKPPMVMTPPTCTDHSPSRKLPEIQHPKFAAKRRWTCSKPKPSTMLREAVMATSDKLMLEPPSAYPITPSSPLYTNTDSLTVITPVKKKRGRPKKQPLLTVETIHEGTSTSPVSPISREFPGTKKRKRRRNLAKLAQLVPGEDKPMSEMKFHKKVGKLGVLDKKTIKTINKMKTLKRKNILNQILSCSSSVALKAKAPPETSPGAAAIESKLGKQINVSKRGTIYIGKKRGRKPRAELPPPSEEPKTAIKHPRPVSSQPDVPAVPSNFQSLVASSPAAMHPLSTQLGGSNGNLSPASTETNFSELKTMPNLQPISALPTKTQKGIHSGTWKLSPPRLMANSPSHLCEIGSLKEITLSPVSESHSEETIPSDSGIGTDNNSTSDQAEKSSESRRRYSFDFCSLDNPEAIPSDTSTKNRHGHRQKHLIVDNFLAHESLKKPKHKRKRKSLQNRDDLQFLADLEELITKFQVFRISHRSYTFYHENPYPSIFRINFDHYYPVPYIQYDPLLYLRRTSDLKSKKKRGRPAKTNDTMTKVPFLQGFSYPIPSGSYYAPYGMPYTSMPMMNLGYYGQYPAPLYLSHTLGAASPFMRPTVPPPQFHTNSHVKMSGAAKHKAKHGVHLQGPVSMGLGDMQPSLNPPKVGSASLSSGRLHKRKHKHKHKHKEDRILGTHDNLSGLFAGKATGFSSHILSERLSSADKELPLVSEKNKHKEKQKHQHSEAGHKASKNNFEVDTLSTLSLSDAQHWTQAKEKGDLSSEPVDSCTKRYSGSGGDGGSTRSENLDVFSEMNPSNDKWDSDVSGSKRRSYEGFGTYREKDIQAFKMNRKERSSYDSSMSPGMPSPHLKVDQTAVHSKNEGSVPTMMTRKKPAAVDSVTIPPAPVLSLLAASAATSDAVGSSLKKRFKRREIEAIQCEVRKMCNYTKILSTKKNLDHVNKILKAKRLQRQSKTGNNFVKKRRGRPRKQPTQFDEDSRDQMPVLEKCIDLPSKRGQKPSLSPLVLEPAASQDTIMATIEAVIHMAREAPPLPPPPPPPLPPPPPPPLPPPPPLPKTPRGGKRKHKPQAPAQPPQQSPPQQPLPQEEEVKAKRQRKSRGSESEVLP.

A compositionally biased stretch (polar residues) spans M1–Q12. Disordered regions lie at residues M1–G83, K134–A426, and S475–L518. The span at G64 to V81 shows a compositional bias: basic and acidic residues. Low complexity predominate over residues L164–K175. 2 stretches are compositionally biased toward polar residues: residues K213–F236 and A270–K282. The segment covering A290–A306 has biased composition (low complexity). Positions D363–Y372 are enriched in basic and acidic residues. Polar residues predominate over residues D375–N395. The a.T hook 1 DNA-binding region spans K584–L596. Disordered stretches follow at residues G604 to K624, Y722 to S763, and H777 to E796. Polar residues predominate over residues L779 to E796. Residue K817 is modified to N6-acetyllysine. The span at S854–D880 shows a compositional bias: polar residues. The disordered stretch occupies residues S854–R889. Residues K1016–T1028 constitute a DNA-binding region (a.T hook 2). 6 disordered regions span residues P1134 to L1164, E1202 to N1225, A1245 to R1300, S1325 to Q1344, Q1440 to P1473, and E1518 to P1596. The span at R1146–K1159 shows a compositional bias: basic residues. The span at V1450–K1459 shows a compositional bias: basic residues. Positions K1451 to Q1463 form a DNA-binding region, a.T hook 3. A run of 3 repeats spans residues P1520–P1527, P1528–P1535, and P1536–P1543. The tract at residues P1520–P1543 is 3 X 8 AA tandem repeats of P-P-L-P-P-P-P-P. Pro residues-rich tracts occupy residues P1520–K1546 and P1560–P1572.

Interacts with SET. As to expression, expressed in numerous tissues. Expressed at low levels in myeloid and monocytic cells as well as in CD34+ cells; expression levels are higher in myeloid malignancies.

The protein localises to the nucleus. The protein is SET-binding protein (SETBP1) of Homo sapiens (Human).